We begin with the raw amino-acid sequence, 203 residues long: Glycerol-3-phosphate acyltransferase (203 aa).

A run of 4 helical transmembrane segments spans residues 4–24 (LALI…AVLI), 68–88 (IPVW…VIAI), 117–137 (PIGL…AVLF), and 155–175 (TWMF…LIVF).

The protein belongs to the PlsY family. Probably interacts with PlsX.

It localises to the cell inner membrane. The enzyme catalyses an acyl phosphate + sn-glycerol 3-phosphate = a 1-acyl-sn-glycero-3-phosphate + phosphate. The protein operates within lipid metabolism; phospholipid metabolism. Catalyzes the transfer of an acyl group from acyl-phosphate (acyl-PO(4)) to glycerol-3-phosphate (G3P) to form lysophosphatidic acid (LPA). This enzyme utilizes acyl-phosphate as fatty acyl donor, but not acyl-CoA or acyl-ACP. The polypeptide is Glycerol-3-phosphate acyltransferase (Vibrio campbellii (strain ATCC BAA-1116)).